A 1412-amino-acid chain; its full sequence is DNA-directed RNA polymerase subunit beta'' (1412 aa).

Positions 220, 294, 301, and 304 each coordinate Zn(2+).

This sequence belongs to the RNA polymerase beta' chain family. RpoC2 subfamily. In plastids the minimal PEP RNA polymerase catalytic core is composed of four subunits: alpha, beta, beta', and beta''. When a (nuclear-encoded) sigma factor is associated with the core the holoenzyme is formed, which can initiate transcription. It depends on Zn(2+) as a cofactor.

It is found in the plastid. The protein localises to the chloroplast. It carries out the reaction RNA(n) + a ribonucleoside 5'-triphosphate = RNA(n+1) + diphosphate. DNA-dependent RNA polymerase catalyzes the transcription of DNA into RNA using the four ribonucleoside triphosphates as substrates. The chain is DNA-directed RNA polymerase subunit beta'' from Chara vulgaris (Common stonewort).